A 390-amino-acid chain; its full sequence is S-adenosylmethionine synthase 2 (390 aa).

Mg(2+) is bound at residue Glu9. Position 15 (His15) interacts with ATP. Glu43 serves as a coordination point for K(+). The L-methionine site is built by Glu56 and Gln99. Residues 167 to 169 (DGK), 235 to 238 (SGRF), Asp246, 252 to 253 (RK), Ala269, Lys273, and Lys277 contribute to the ATP site. Asp246 is an L-methionine binding site. Lys277 serves as a coordination point for L-methionine.

This sequence belongs to the AdoMet synthase family. As to quaternary structure, homotetramer. Mn(2+) is required as a cofactor. The cofactor is Mg(2+). Requires Co(2+) as cofactor. It depends on K(+) as a cofactor.

The protein localises to the cytoplasm. The catalysed reaction is L-methionine + ATP + H2O = S-adenosyl-L-methionine + phosphate + diphosphate. The protein operates within amino-acid biosynthesis; S-adenosyl-L-methionine biosynthesis; S-adenosyl-L-methionine from L-methionine: step 1/1. Functionally, catalyzes the formation of S-adenosylmethionine from methionine and ATP. The reaction comprises two steps that are both catalyzed by the same enzyme: formation of S-adenosylmethionine (AdoMet) and triphosphate, and subsequent hydrolysis of the triphosphate. In Nicotiana tabacum (Common tobacco), this protein is S-adenosylmethionine synthase 2 (SAMS2).